Here is a 183-residue protein sequence, read N- to C-terminus: Threonylcarbamoyl-AMP synthase (183 aa).

The YrdC-like domain occupies 1 to 183; that stretch reads MNREQIAEAL…LRTNQLFRQG (183 aa).

The protein belongs to the SUA5 family. TsaC subfamily.

The protein resides in the cytoplasm. It carries out the reaction L-threonine + hydrogencarbonate + ATP = L-threonylcarbamoyladenylate + diphosphate + H2O. Its function is as follows. Required for the formation of a threonylcarbamoyl group on adenosine at position 37 (t(6)A37) in tRNAs that read codons beginning with adenine. Catalyzes the conversion of L-threonine, HCO(3)(-)/CO(2) and ATP to give threonylcarbamoyl-AMP (TC-AMP) as the acyladenylate intermediate, with the release of diphosphate. This Haemophilus influenzae (strain 86-028NP) protein is Threonylcarbamoyl-AMP synthase.